The chain runs to 245 residues: Eukaryotic translation initiation factor 6-2 (245 aa).

Belongs to the eIF-6 family. Monomer. Associates with the 60S ribosomal subunit.

Its subcellular location is the cytoplasm. The protein resides in the nucleus. It is found in the nucleolus. Binds to the 60S ribosomal subunit and prevents its association with the 40S ribosomal subunit to form the 80S initiation complex in the cytoplasm. May also be involved in ribosome biogenesis. This chain is Eukaryotic translation initiation factor 6-2, found in Arabidopsis thaliana (Mouse-ear cress).